We begin with the raw amino-acid sequence, 472 residues long: Phosphoenolpyruvate carboxykinase (ATP), glycosomal (472 aa).

An ATP-binding site is contributed by 221–228 (GLSGTGKT).

Belongs to the phosphoenolpyruvate carboxykinase (ATP) family. Homodimer.

Its subcellular location is the glycosome. It catalyses the reaction oxaloacetate + ATP = phosphoenolpyruvate + ADP + CO2. It functions in the pathway carbohydrate biosynthesis; gluconeogenesis. This is Phosphoenolpyruvate carboxykinase (ATP), glycosomal (PEPCK) from Trypanosoma cruzi.